A 490-amino-acid chain; its full sequence is Bifunctional protein HldE (490 aa).

Residues 1–330 (MLDFEQLSPA…RKILPHAFLA (330 aa)) are ribokinase. 205-208 (NRKE) is an ATP binding site. Aspartate 275 is a catalytic residue. Positions 358-490 (FTNGCFDILH…LVARAQNGKS (133 aa)) are cytidylyltransferase.

In the N-terminal section; belongs to the carbohydrate kinase PfkB family. This sequence in the C-terminal section; belongs to the cytidylyltransferase family. Homodimer.

It carries out the reaction D-glycero-beta-D-manno-heptose 7-phosphate + ATP = D-glycero-beta-D-manno-heptose 1,7-bisphosphate + ADP + H(+). The catalysed reaction is D-glycero-beta-D-manno-heptose 1-phosphate + ATP + H(+) = ADP-D-glycero-beta-D-manno-heptose + diphosphate. The protein operates within nucleotide-sugar biosynthesis; ADP-L-glycero-beta-D-manno-heptose biosynthesis; ADP-L-glycero-beta-D-manno-heptose from D-glycero-beta-D-manno-heptose 7-phosphate: step 1/4. Its pathway is nucleotide-sugar biosynthesis; ADP-L-glycero-beta-D-manno-heptose biosynthesis; ADP-L-glycero-beta-D-manno-heptose from D-glycero-beta-D-manno-heptose 7-phosphate: step 3/4. Its function is as follows. Catalyzes the phosphorylation of D-glycero-D-manno-heptose 7-phosphate at the C-1 position to selectively form D-glycero-beta-D-manno-heptose-1,7-bisphosphate. Catalyzes the ADP transfer from ATP to D-glycero-beta-D-manno-heptose 1-phosphate, yielding ADP-D-glycero-beta-D-manno-heptose. This is Bifunctional protein HldE from Rhodopseudomonas palustris (strain BisA53).